The following is a 130-amino-acid chain: 3-aminoacrylate deaminase RutC (130 aa).

The protein belongs to the RutC family.

It carries out the reaction (Z)-3-aminoacrylate + H2O + H(+) = 3-oxopropanoate + NH4(+). Involved in pyrimidine catabolism. Catalyzes the deamination of 3-aminoacrylate to malonic semialdehyde, a reaction that can also occur spontaneously. RutC may facilitate the reaction and modulate the metabolic fitness, rather than catalyzing essential functions. The polypeptide is 3-aminoacrylate deaminase RutC (Klebsiella pneumoniae (strain 342)).